A 315-amino-acid polypeptide reads, in one-letter code: Glycine--tRNA ligase alpha subunit (315 aa).

Belongs to the class-II aminoacyl-tRNA synthetase family. In terms of assembly, tetramer of two alpha and two beta subunits.

The protein localises to the cytoplasm. It carries out the reaction tRNA(Gly) + glycine + ATP = glycyl-tRNA(Gly) + AMP + diphosphate. This Pseudomonas putida (strain ATCC 47054 / DSM 6125 / CFBP 8728 / NCIMB 11950 / KT2440) protein is Glycine--tRNA ligase alpha subunit.